The chain runs to 122 residues: MLPGTFFEVLKNEGVVAIATQGEDGPHLVNTWNSYLKVLDGNRIVVPVGGMHKTEANVARDERVLMTLGSRKVAGRNGPGTGFLIRGSAAFRTDGPEFEAIARFKWARAALVITVVSAEQTL.

Monomer and homodimer. FMN serves as cofactor.

It is found in the cytoplasm. Functions as a redox protein with a potential of -325 mV. In Nitratidesulfovibrio vulgaris (strain DSM 19637 / Miyazaki F) (Desulfovibrio vulgaris), this protein is FMN-binding protein.